Consider the following 301-residue polypeptide: Polynucleotide kinase (301 aa).

As to quaternary structure, homotetramer. Requires Mg(2+) as cofactor.

It catalyses the reaction a 5'-end dephospho-2'-deoxyribonucleoside-DNA + ATP = a 5'-end 5'-phospho-2'-deoxyribonucleoside-DNA + ADP + H(+). The enzyme catalyses a 2'-deoxyribonucleoside 3'-phosphate + H2O = a 2'-deoxyribonucleoside + phosphate. In terms of biological role, acts as a 5'-hydroxyl kinase, a 3'-phosphatase and a 2',3'-cyclic phosphodiesterase. Catalyzes the transfer of the terminal phosphate of ATP to the 5'-hydroxyl termini of ribo- and deoxyribonucleotides. In the presence of ADP the enzyme also catalyzes an exchange reaction. In the exchange reaction, an excess ADP causes the enzyme to transfer the 5' terminal phosphate from phosphorylated DNA to ADP. Involved in countering a host defense mechanism which activates T4-induced anticodon nuclease and shuts off viral translation. The polynucleotide kinase modifies the ends of nicked tRNA generated by the antiviral response of the host bacteria and facilitates repair by T4 RNA ligase. The protein is Polynucleotide kinase (pseT) of Escherichia coli (Bacteriophage T4).